The following is a 145-amino-acid chain: MEKLVESLSSNQKRNQALLHPFEGNEALLELTKGRLGNEEPCHVKGAQGEEYVILPKHLLLGLVNLLQKGREERVKLNLERDILQQMPIDFEDVWEVALQEIHRENANPSYVDTKRLIKEIKRRHPNLFFQLGDLFGRAKEEMLD.

This sequence belongs to the UPF0763 family.

The protein is UPF0763 protein WS1752 of Wolinella succinogenes (strain ATCC 29543 / DSM 1740 / CCUG 13145 / JCM 31913 / LMG 7466 / NCTC 11488 / FDC 602W) (Vibrio succinogenes).